A 306-amino-acid polypeptide reads, in one-letter code: Leucotoxin LukEv (306 aa).

The first 23 residues, 1–23, serve as a signal peptide directing secretion; the sequence is MLAATLSVGLIAPLASPIQESRA.

The protein belongs to the aerolysin family. Toxicity requires sequential binding and synergistic association of a class S and a class F component which form heterooligomeric complexes. LukEv (class S) associates with LukDv (class F).

It localises to the secreted. Functionally, part of a bi-component leucotoxin that acts by forming pores in the membrane of the target cells. The activity of LukEv-LukDv to rabbit leukocytes is similar to that of the Panton-Valentine leucocidin (PVL). LukEv-LukDv is hemolytic to rabbit red blood cells although the activity is only 8% of gamma-hemolysin. The protein is Leucotoxin LukEv (lukEv) of Staphylococcus aureus (strain NCTC 8325 / PS 47).